The primary structure comprises 319 residues: Ribonucleoside-diphosphate reductase 2 subunit beta (319 aa).

Asp67, Glu98, and His101 together coordinate Fe cation. Tyr105 is an active-site residue. Fe cation contacts are provided by Glu158, Glu192, and His195.

Belongs to the ribonucleoside diphosphate reductase small chain family. Tetramer of two alpha and two beta subunits. Requires Fe cation as cofactor.

The catalysed reaction is a 2'-deoxyribonucleoside 5'-diphosphate + [thioredoxin]-disulfide + H2O = a ribonucleoside 5'-diphosphate + [thioredoxin]-dithiol. Provides the precursors necessary for DNA synthesis. Catalyzes the biosynthesis of deoxyribonucleotides from the corresponding ribonucleotides. R2F contains the tyrosyl radical required for catalysis. The chain is Ribonucleoside-diphosphate reductase 2 subunit beta (nrdF) from Salmonella typhimurium (strain LT2 / SGSC1412 / ATCC 700720).